A 183-amino-acid chain; its full sequence is Streptavidin (183 aa).

The signal sequence occupies residues methionine 1–alanine 24. One can recognise an Avidin-like domain in the interval alanine 37 to proline 159. Positions 67 and 78 each coordinate biotin. Residues arginine 83–aspartate 85 carry the Cell attachment site; atypical motif. Residues tryptophan 116, tryptophan 132, and tryptophan 144 each coordinate biotin.

Belongs to the avidin/streptavidin family. As to quaternary structure, homotetramer.

It localises to the secreted. The biological function of streptavidin is not known. Forms a strong non-covalent specific complex with biotin (one molecule of biotin per subunit of streptavidin). This chain is Streptavidin, found in Streptomyces avidinii.